Reading from the N-terminus, the 429-residue chain is 28S rRNA (cytosine-C(5))-methyltransferase (429 aa).

G2 carries the N-acetylglycine modification. A Phosphoserine modification is found at S167. Residues 234–240, D258, R263, and D305 each bind S-adenosyl-L-methionine; that span reads CAAPGNK. The active-site Nucleophile is the C359.

Belongs to the class I-like SAM-binding methyltransferase superfamily. RsmB/NOP family. In terms of tissue distribution, ubiquitous. Detected in placenta, heart and skeletal muscle.

The protein localises to the nucleus. It is found in the nucleolus. It carries out the reaction cytidine(3782) in 28S rRNA + S-adenosyl-L-methionine = 5-methylcytidine(3782) in 28S rRNA + S-adenosyl-L-homocysteine + H(+). Functionally, S-adenosyl-L-methionine-dependent methyltransferase that specifically methylates the C(5) position of cytosine 3782 (m5C3782) in 28S rRNA. m5C3782 promotes protein translation without affecting ribosome biogenesis and fidelity. Required for corpus callosum and cerebral cortex development. The sequence is that of 28S rRNA (cytosine-C(5))-methyltransferase from Homo sapiens (Human).